The following is a 165-amino-acid chain: MSGKLTHIDQTGAANMVDVGSKDETERQAVAEGAVRMKPETLALILEGNAAKGDVIGTARLAGIMAAKRTSDLIPLCHPLMLTKVAVEIEPDENLPGLRVRALARLKGRTGVEMEALTAASVTCLTIYDMAKAVDRHMEIGSIRVIEKSGGKSGDWAVSDPASMR.

Residues Leu-76–His-78 and Met-114–Glu-115 contribute to the substrate site. Asp-129 is an active-site residue.

The protein belongs to the MoaC family. Homohexamer; trimer of dimers.

The catalysed reaction is (8S)-3',8-cyclo-7,8-dihydroguanosine 5'-triphosphate = cyclic pyranopterin phosphate + diphosphate. Its pathway is cofactor biosynthesis; molybdopterin biosynthesis. Catalyzes the conversion of (8S)-3',8-cyclo-7,8-dihydroguanosine 5'-triphosphate to cyclic pyranopterin monophosphate (cPMP). In Brucella melitensis biotype 2 (strain ATCC 23457), this protein is Cyclic pyranopterin monophosphate synthase.